Consider the following 413-residue polypeptide: MSASVSPLAPKYYPAMPVIHGVRIATAAAGIKYKGRTDLMLMVFDRPAEAAGVFTRSLCPSAPVDFCRRNLVHGKARAVVVNSGNANAFTGLKGREATQATAEAAAKAIGCATTDIFLASTGVIGEPLDAGKFSHLLGDMAESATEDFWTEAAKAIMTTDTYPKVATETVLLGQVPVTINGIAKGAGMIAPDMATMLSFVVTDAPIKADALQSLLSKGVGSTFNSVTVDSDTSTSDTLMLFATGTAAERGAPEITDAADKRLADFKKALGRVLKSLALQVVRDGEGARKMVEVEVTGAKSAASAKKIALSIANSPLVKTAVAGEDANWGRVVMAVGKAGEPADRDRLAIWFGDIRVAHQGERDPAYSEDATSAYMEGEDIRIRVDLSIGRGKATVWTCDLTKEYVAINGDYRS.

Substrate-binding residues include T158, K184, T195, E285, N408, and S413. The active-site Nucleophile is the T195.

The protein belongs to the ArgJ family. As to quaternary structure, heterotetramer of two alpha and two beta chains.

The protein localises to the cytoplasm. It carries out the reaction N(2)-acetyl-L-ornithine + L-glutamate = N-acetyl-L-glutamate + L-ornithine. It catalyses the reaction L-glutamate + acetyl-CoA = N-acetyl-L-glutamate + CoA + H(+). The protein operates within amino-acid biosynthesis; L-arginine biosynthesis; L-ornithine and N-acetyl-L-glutamate from L-glutamate and N(2)-acetyl-L-ornithine (cyclic): step 1/1. It participates in amino-acid biosynthesis; L-arginine biosynthesis; N(2)-acetyl-L-ornithine from L-glutamate: step 1/4. In terms of biological role, catalyzes two activities which are involved in the cyclic version of arginine biosynthesis: the synthesis of N-acetylglutamate from glutamate and acetyl-CoA as the acetyl donor, and of ornithine by transacetylation between N(2)-acetylornithine and glutamate. This is Arginine biosynthesis bifunctional protein ArgJ from Brucella melitensis biotype 1 (strain ATCC 23456 / CCUG 17765 / NCTC 10094 / 16M).